We begin with the raw amino-acid sequence, 336 residues long: Galactose/methyl galactoside import permease protein MglC (336 aa).

8 helical membrane passes run 17–37, 53–73, 107–127, 128–148, 181–201, 231–251, 257–277, and 306–326; these read AIYF…PTFL, LIIA…LSAG, VVIL…GLVI, AYLN…IYGF, FKLS…WIMW, LVAI…LEAG, TNNL…VGGV, and IGVN…LAVA.

It belongs to the binding-protein-dependent transport system permease family. AraH/RbsC subfamily. In terms of assembly, the complex is composed of one ATP-binding protein (MglA), two transmembrane proteins (MglC) and a solute-binding protein (MglB).

Its subcellular location is the cell inner membrane. Functionally, part of the ABC transporter complex MglABC involved in galactose/methyl galactoside import. Probably responsible for the translocation of the substrate across the membrane. This chain is Galactose/methyl galactoside import permease protein MglC (mglC), found in Haemophilus influenzae (strain ATCC 51907 / DSM 11121 / KW20 / Rd).